A 271-amino-acid polypeptide reads, in one-letter code: 3-methyl-2-oxobutanoate hydroxymethyltransferase 1 (271 aa).

Mg(2+) is bound by residues D53 and D92. Residues 53-54 (DS), D92, and K120 contribute to the 3-methyl-2-oxobutanoate site. E122 is a binding site for Mg(2+). E189 functions as the Proton acceptor in the catalytic mechanism.

Belongs to the PanB family. As to quaternary structure, homodecamer; pentamer of dimers. The cofactor is Mg(2+).

Its subcellular location is the cytoplasm. It carries out the reaction 3-methyl-2-oxobutanoate + (6R)-5,10-methylene-5,6,7,8-tetrahydrofolate + H2O = 2-dehydropantoate + (6S)-5,6,7,8-tetrahydrofolate. The protein operates within cofactor biosynthesis; (R)-pantothenate biosynthesis; (R)-pantoate from 3-methyl-2-oxobutanoate: step 1/2. In terms of biological role, catalyzes the reversible reaction in which hydroxymethyl group from 5,10-methylenetetrahydrofolate is transferred onto alpha-ketoisovalerate to form ketopantoate. In Burkholderia ambifaria (strain ATCC BAA-244 / DSM 16087 / CCUG 44356 / LMG 19182 / AMMD) (Burkholderia cepacia (strain AMMD)), this protein is 3-methyl-2-oxobutanoate hydroxymethyltransferase 1.